Consider the following 716-residue polypeptide: Mitochondrial Rho GTPase 1 (716 aa).

Topologically, residues 1 to 692 are cytoplasmic; sequence MSPDAIRVVV…VSVDQDDIKH (692 aa). One can recognise a Miro 1 domain in the interval 3–224; that stretch reads PDAIRVVVCG…FYLCQRAVTH (222 aa). Residues 58-99 are disordered; the sequence is NDQDHHHHHQSSPSTMKNKRKHNNKRERERERESSINNVQPN. GTP-binding positions include 84-91, 113-115, and 167-170; these read ERERERES, DTS, and NKSD. Positions 240-275 constitute an EF-hand 1 domain; it reads GAIKPLKRIFWLSDTDQDGYLNFEELSELHKKCFGI. Asp-253, Asp-255, Asp-257, Tyr-259, and Glu-264 together coordinate Ca(2+). The disordered stretch occupies residues 303 to 327; sequence TQTPPQQQHLATSAGTPNGTTTTTS. Residues 388-423 enclose the EF-hand 2 domain; sequence TGYKFFVDLFIKFDKDNDGGLNEDELNTLFRSTPGI. Residues Asp-401, Asp-403, Asp-405, and Glu-412 each contribute to the Ca(2+) site. The 167-residue stretch at 505-671 folds into the Miro 2 domain; sequence RNVFNCFIVG…FIQLVDAAKT (167 aa). Residues 514–521, 550–554, and 620–623 contribute to the GTP site; these read GAPKAGKS, ELRGG, and LKAD. The helical; Anchor for type IV membrane protein transmembrane segment at 693–713 threads the bilayer; that stretch reads IIMTGAAIAVVGLVSIWVLNS. The Mitochondrial intermembrane segment spans residues 714–716; that stretch reads LRR.

The protein belongs to the mitochondrial Rho GTPase family.

It localises to the mitochondrion outer membrane. In terms of biological role, mitochondrial GTPase involved in mitochondrial trafficking. Probably involved in control of anterograde transport of mitochondria and their subcellular distribution. The sequence is that of Mitochondrial Rho GTPase 1 (GEM1) from Candida albicans (strain SC5314 / ATCC MYA-2876) (Yeast).